Here is a 485-residue protein sequence, read N- to C-terminus: METVQLRNNPRRHLKKLSEESLNKQPEEVFDVLEKLGEGSYGSVYKASHKETSQIVAIKQIPVESDLQEIIKEIAIMQQCDSLHVVKYYGSYFKNTDLWIVMEFCGGGSISDIIRLRKQTLKEDETATILQSTLKGLEYLHFMRKIHRDIKAGNILLNSEGTAKLADFGVAGQLTDTMAKRNTVIGTPFWMAPEVIQEIGYNCVADIWSLGITAIEMAEGKPPYAEIHPMRAIFMIPSNPPPTFRKPELWSKDFVDFINLCLVKNPELRSSATELLQHPFIKTAKGESILRHLINEAQDAKLKRTELKQREVEPEEEENADEDEADVGTMVQAGSKDLNTMKEFSTMNEAADCTMVEKDKLNTQMGTMLINDEDEEETGTMKQCTEPVQPAKPSFLEYFEQKENQFGTPEKTTPAPSTDPSEWKIPLNGDYSFLKDWSVTELQLRLNSLDPMMEQEIEEIHHKYQAKRQPILEAIESKKRRQQNF.

The region spanning 30-281 is the Protein kinase domain; the sequence is FDVLEKLGEG…ATELLQHPFI (252 aa). Residues 36–44 and K59 contribute to the ATP site; that span reads LGEGSYGSV. D149 acts as the Proton acceptor in catalysis. Position 183 is a phosphothreonine; by autocatalysis (T183). Positions 287–313 form a coiled coil; sequence ESILRHLINEAQDAKLKRTELKQREVE. One can recognise an SARAH domain in the interval 431–478; it reads YSFLKDWSVTELQLRLNSLDPMMEQEIEEIHHKYQAKRQPILEAIESK.

It belongs to the protein kinase superfamily. STE Ser/Thr protein kinase family. STE20 subfamily. As to quaternary structure, homodimer; mediated via the coiled-coil region. The cofactor is Mg(2+). Post-translationally, autophosphorylated on Thr-183. Proteolytically cleaved by caspase-3 during apoptosis at Asp-326 resulting in a 37 kDa form. Proteolytic cleavage results in kinase activation and nuclear translocation of the truncated form (MST1/N).

It localises to the cytoplasm. The protein localises to the nucleus. It carries out the reaction L-seryl-[protein] + ATP = O-phospho-L-seryl-[protein] + ADP + H(+). It catalyses the reaction L-threonyl-[protein] + ATP = O-phospho-L-threonyl-[protein] + ADP + H(+). Its activity is regulated as follows. The C-terminal non-catalytic region inhibits the kinase activity, the enzyme is activated by caspase-cleavage. Homodimerization and autophosphorylation of Thr-183 is also required for full activation. Stress-activated, pro-apoptotic kinase which, following caspase-cleavage, enters the nucleus and induces chromatin condensation followed by internucleosomal DNA fragmentation. Key component of the Hippo signaling pathway which plays a pivotal role in organ size control and tumor suppression by restricting proliferation and promoting apoptosis. The core of this pathway is composed of a kinase cascade wherein stk3/mst2 and stk4/mst1, in complex with its regulatory protein sav1, phosphorylates and activates lats1/2 in complex with its regulatory protein mob1, which in turn phosphorylates and inactivates yap1 oncoprotein and wwtr1/taz. Phosphorylation of yap1 by lats2 inhibits its translocation into the nucleus to regulate cellular genes important for cell proliferation, cell death, and cell migration. Phosphorylates 'Ser-14' of histone H2B (H2BS14ph) during apoptosis. The sequence is that of Serine/threonine-protein kinase 4 (stk4) from Xenopus tropicalis (Western clawed frog).